The chain runs to 290 residues: MGKADIVIKGSKDGLTFFLDSQCDFSELAAAIETKLASADFFLVGAHVTVDVGTRQLHPDQIERLQTLFPSYGLILRGINSWADPVGQHDEEERVVLKGNRERIYQIANHLYESTERADGAARNYDYRDESASSFSPVGTAPDYAEATTEPADCFGGSPSDMQTAILTQGGDERTLLIQRTLRSGQTVRYPGHVVILGDVNPGAEVVAGGNIIVMGVFRGVAHAGAMGSDEAVVTAYRLRPTQLRIANHITRPPDEEEEGPEHPEIARIRDGMVTIERYHYGTKSYGKDV.

It belongs to the MinC family. In terms of assembly, interacts with MinD and FtsZ.

Its function is as follows. Cell division inhibitor that blocks the formation of polar Z ring septums. Rapidly oscillates between the poles of the cell to destabilize FtsZ filaments that have formed before they mature into polar Z rings. Prevents FtsZ polymerization. In Heliobacterium modesticaldum (strain ATCC 51547 / Ice1), this protein is Probable septum site-determining protein MinC.